A 685-amino-acid polypeptide reads, in one-letter code: Probable serine/threonine-protein kinase CPE1738 (685 aa).

Residues 10–275 (YELLQCVGEG…LEKIKKDPNV (266 aa)) form the Protein kinase domain. ATP-binding positions include 16–24 (VGEGGMSFV) and Lys-39. The active-site Proton acceptor is the Glu-143. The disordered stretch occupies residues 277-339 (ISSKSAEDED…NIQTKPQKAI (63 aa)). Residues 306 to 329 (EPDEDDEDDDEYYEDDEDEDEEEN) show a composition bias toward acidic residues. PASTA domains follow at residues 376-440 (GKDV…TVSG), 441-508 (GEGQ…TISK), 513-581 (KSET…TINY), and 589-648 (EKPK…TMEE). Residues 480–500 (VPRGEVISQSPNANESVDKGS) are disordered. The disordered stretch occupies residues 623-685 (DTAKVKSVSN…PKQPEQSGNN (63 aa)). Composition is skewed to low complexity over residues 627-645 (VKSV…VSVT) and 654-685 (QPTQ…SGNN).

The protein belongs to the protein kinase superfamily. Ser/Thr protein kinase family.

It catalyses the reaction L-seryl-[protein] + ATP = O-phospho-L-seryl-[protein] + ADP + H(+). The enzyme catalyses L-threonyl-[protein] + ATP = O-phospho-L-threonyl-[protein] + ADP + H(+). The protein is Probable serine/threonine-protein kinase CPE1738 of Clostridium perfringens (strain 13 / Type A).